The primary structure comprises 144 residues: Na(+)/H(+) antiporter subunit B (144 aa).

A run of 4 helical transmembrane segments spans residues 9–31, 41–58, 75–97, and 117–139; these read VLLHTLTRVVTFIILAFSVYLFF, FIGGLMTASALLLMYLGF, IAFGLLIAIFTGFGGLLVGDPYL, and ALPFDLGIYLVVIGIALTIILTI.

The protein belongs to the CPA3 antiporters (TC 2.A.63) subunit B family. As to quaternary structure, forms a heterooligomeric complex that consists of seven subunits: MrpA, MrpB, MrpC, MrpD, MrpE, MrpF and MrpG.

It is found in the cell membrane. In terms of biological role, mnh complex is a Na(+)Li(+)/H(+) antiporter involved in Na(+) and/or Li(+) excretion and Na(+) resistance. Na(+)/H(+) antiport consumes a transmembrane electrical potential, and is thus inferred to be electrogenic. Does not transport K(+), Ca(2+) or Mg(2+). The protein is Na(+)/H(+) antiporter subunit B (mrpB) of Alkalihalophilus pseudofirmus (strain ATCC BAA-2126 / JCM 17055 / OF4) (Bacillus pseudofirmus).